The chain runs to 474 residues: Proline--tRNA ligase (474 aa).

It belongs to the class-II aminoacyl-tRNA synthetase family. ProS type 3 subfamily. Homodimer.

The protein localises to the cytoplasm. It catalyses the reaction tRNA(Pro) + L-proline + ATP = L-prolyl-tRNA(Pro) + AMP + diphosphate. Its function is as follows. Catalyzes the attachment of proline to tRNA(Pro) in a two-step reaction: proline is first activated by ATP to form Pro-AMP and then transferred to the acceptor end of tRNA(Pro). The chain is Proline--tRNA ligase from Phytoplasma australiense.